The primary structure comprises 402 residues: Multidrug resistance protein MdtH (402 aa).

Residues 1-12 (MSRVSQARNLGK) are Cytoplasmic-facing. A helical membrane pass occupies residues 13 to 33 (YFLLIDNMLVVLGFFVVFPLI). Over 34 to 98 (SIRFVDQMGW…GFATMGIAHE (65 aa)) the chain is Periplasmic. A helical transmembrane segment spans residues 99-116 (PWLLWFSCLLSGLGGTLF). The Cytoplasmic portion of the chain corresponds to 117–138 (DPPRSALVVKLIRPQQRGRFFS). Residues 139–159 (LLMMQDSAGAVIGALLGSWLL) form a helical membrane-spanning segment. Topologically, residues 160 to 164 (QYDFR) are periplasmic. A helical membrane pass occupies residues 165–185 (LVCATGAVLFVLCAAFNAWLL). Topologically, residues 186–213 (PAWKLSTVRTPVREGMTRVMRDKRFVTY) are cytoplasmic. A helical transmembrane segment spans residues 214 to 234 (VLTLAGYYMLAVQVMLMLPIM). The Periplasmic segment spans residues 235 to 243 (VNDVAGAPS). The chain crosses the membrane as a helical span at residues 244-264 (AVKWMYAIEACLSLTLLYPIA). Residues 265 to 276 (RWSEKHFRLEHR) are Cytoplasmic-facing. A helical transmembrane segment spans residues 277–297 (LMAGLLIMSLSMMPVGMVSGL). At 298–299 (QQ) the chain is on the periplasmic side. The helical transmembrane segment at 300–320 (LFTLICLFYIGSIIAEPARET) threads the bilayer. The Cytoplasmic portion of the chain corresponds to 321–339 (LSASLADARARGSYMGFSR). The helical transmembrane segment at 340 to 360 (LGLAIGGAIGYIGGGWLFDLG) threads the bilayer. The Periplasmic segment spans residues 361-367 (KSVHQPE). A helical membrane pass occupies residues 368–388 (LPWMMLGIIGIFTFLALGWQF). The Cytoplasmic segment spans residues 389 to 402 (SQKRAARRLLERDA).

The protein belongs to the major facilitator superfamily. DHA1 family. MdtH (TC 2.A.1.2.21) subfamily.

It is found in the cell inner membrane. Confers resistance to norfloxacin and enoxacin. This Escherichia coli O157:H7 protein is Multidrug resistance protein MdtH.